Consider the following 646-residue polypeptide: Acetyl-coenzyme A synthetase (646 aa).

Residues 190-193 (RAGN) and threonine 309 contribute to the CoA site. Residues 385-387 (GEP), 409-414 (DTWWQT), aspartate 498, and arginine 513 each bind ATP. Serine 521 is a binding site for CoA. ATP is bound at residue arginine 524. Residues valine 535, histidine 537, and valine 540 each coordinate Mg(2+). Arginine 582 is a CoA binding site. The residue at position 607 (lysine 607) is an N6-acetyllysine.

Belongs to the ATP-dependent AMP-binding enzyme family. Mg(2+) is required as a cofactor. Post-translationally, acetylated. Deacetylation by the SIR2-homolog deacetylase activates the enzyme.

The enzyme catalyses acetate + ATP + CoA = acetyl-CoA + AMP + diphosphate. Functionally, catalyzes the conversion of acetate into acetyl-CoA (AcCoA), an essential intermediate at the junction of anabolic and catabolic pathways. AcsA undergoes a two-step reaction. In the first half reaction, AcsA combines acetate with ATP to form acetyl-adenylate (AcAMP) intermediate. In the second half reaction, it can then transfer the acetyl group from AcAMP to the sulfhydryl group of CoA, forming the product AcCoA. This chain is Acetyl-coenzyme A synthetase, found in Pseudoalteromonas translucida (strain TAC 125).